Consider the following 399-residue polypeptide: Tyrosine--tRNA ligase (399 aa).

Positions 42–51 (PTAPDLHLGH) match the 'HIGH' region motif. Residues 226-230 (KMSKS) carry the 'KMSKS' region motif. K229 is an ATP binding site. The S4 RNA-binding domain occupies 337-398 (IAIANLLKDA…GKRKFARITV (62 aa)).

The protein belongs to the class-I aminoacyl-tRNA synthetase family. TyrS type 2 subfamily. As to quaternary structure, homodimer.

Its subcellular location is the cytoplasm. It carries out the reaction tRNA(Tyr) + L-tyrosine + ATP = L-tyrosyl-tRNA(Tyr) + AMP + diphosphate + H(+). Catalyzes the attachment of tyrosine to tRNA(Tyr) in a two-step reaction: tyrosine is first activated by ATP to form Tyr-AMP and then transferred to the acceptor end of tRNA(Tyr). This chain is Tyrosine--tRNA ligase, found in Colwellia psychrerythraea (strain 34H / ATCC BAA-681) (Vibrio psychroerythus).